The primary structure comprises 130 residues: Small ribosomal subunit protein uS9 (130 aa).

This sequence belongs to the universal ribosomal protein uS9 family.

The protein is Small ribosomal subunit protein uS9 of Clostridium beijerinckii (strain ATCC 51743 / NCIMB 8052) (Clostridium acetobutylicum).